Consider the following 125-residue polypeptide: Mitochondrial import inner membrane translocase subunit TIM16 (125 aa).

The tract at residues 58 to 110 (EAQQILNVSKLSPEEVQKNYEHLFKVNDKSVGGSFYLQSKVVRAKERLDEELR) is J-like. S69 is subject to Phosphoserine.

The protein belongs to the TIM16/PAM16 family. Probable component of the PAM complex at least composed of a mitochondrial HSP70 protein, GRPEL1 or GRPEL2, TIMM44, TIMM16/PAM16 and TIMM14/DNAJC19. Interacts with DNAJC19. Directly interacts with DNAJC15; this interaction counteracts DNAJC15-dependent stimulation of HSPA9 ATPase activity. Associates with the TIM23 complex. In terms of tissue distribution, expressed in trabecular bone and cartilage and by differentiated chondrocytes localized in the hypertrophic zone and by osteoblasts at early developmental stages.

It is found in the mitochondrion inner membrane. Regulates ATP-dependent protein translocation into the mitochondrial matrix. Inhibits DNAJC19 stimulation of HSPA9/Mortalin ATPase activity. The sequence is that of Mitochondrial import inner membrane translocase subunit TIM16 from Mus musculus (Mouse).